Here is a 483-residue protein sequence, read N- to C-terminus: Wax ester synthase/diacylglycerol acyltransferase 10 (483 aa).

At 1-203 (MTKEEVEEEP…SINAVYYAVR (203 aa)) the chain is on the cytoplasmic side. The active-site Proton acceptor is H143. Residues 204–222 (LIWNTIVDLLLLWATSLFF) form a helical membrane-spanning segment. Residues 223 to 483 (KDTETPISEG…MKDTLSGKSD (261 aa)) are Lumenal-facing. 2 N-linked (GlcNAc...) asparagine glycosylation sites follow: N394 and N399.

It in the N-terminal section; belongs to the long-chain O-acyltransferase family. As to expression, mostly expressed in roots.

The protein localises to the cell membrane. The protein resides in the endoplasmic reticulum membrane. It carries out the reaction an acyl-CoA + a 1,2-diacyl-sn-glycerol = a triacyl-sn-glycerol + CoA. The enzyme catalyses a long chain fatty alcohol + a fatty acyl-CoA = a wax ester + CoA. It participates in glycerolipid metabolism; triacylglycerol biosynthesis. The protein operates within lipid metabolism. In terms of biological role, bifunctional wax ester synthase/diacylglycerol acyltransferase. Involved in cuticular wax biosynthesis. This chain is Wax ester synthase/diacylglycerol acyltransferase 10, found in Arabidopsis thaliana (Mouse-ear cress).